The sequence spans 291 residues: U3 small nucleolar ribonucleoprotein protein IMP4 (291 aa).

A Brix domain is found at 83–264 (PKVMITTSRD…LYMIRLGTLE (182 aa)).

As to quaternary structure, part of the small subunit (SSU) processome, composed of more than 70 proteins and the RNA chaperone small nucleolar RNA (snoRNA) U3. Component of a heterotrimeric complex containing IMP3, IMP4 and MPHOSPH10. Interacts with MPHOSPH10.

The protein localises to the nucleus. The protein resides in the nucleolus. In terms of biological role, component of the 60-80S U3 small nucleolar ribonucleoprotein (U3 snoRNP). Required for the early cleavages during pre-18S ribosomal RNA processing. Part of the small subunit (SSU) processome, first precursor of the small eukaryotic ribosomal subunit. During the assembly of the SSU processome in the nucleolus, many ribosome biogenesis factors, an RNA chaperone and ribosomal proteins associate with the nascent pre-rRNA and work in concert to generate RNA folding, modifications, rearrangements and cleavage as well as targeted degradation of pre-ribosomal RNA by the RNA exosome. This is U3 small nucleolar ribonucleoprotein protein IMP4 from Homo sapiens (Human).